A 318-amino-acid chain; its full sequence is Ankyrin repeat and SOCS box protein 7 (318 aa).

ANK repeat units follow at residues 13–42 (QEELQIQAAVAAGDVHTVRKMLEQGYSPNG), 46–75 (NGWTLLHFSAARGKERCVRVFLEHGADPTV), 80–109 (GGFTALHYAAMHGRARIARLMLESEYRSDI), 116–145 (DGWTPLHVAAHYGRDSFVRLLLEFKAEVDP), 149–178 (KGTTPLQLAIIRERSSCVKILLDHNANIDI), 180–208 (NGFLLRYAVIKSNHSYCRMFLQRGADTDL), and 213–242 (DGQTPLHLSALRDDVLCARMLYNYGADTNT). An SOCS box domain is found at 265–318 (LDFLQEVTRQPRNLQDLCRIKIRQCIGLQNLKLLDELPIAKVMKDYLKHKFDDI).

It belongs to the ankyrin SOCS box (ASB) family. As to quaternary structure, interacts with CUL5. Interacts with RNF7. Interacts with PSRC1.

Its pathway is protein modification; protein ubiquitination. Probable substrate-recognition component of a SCF-like ECS (Elongin-Cullin-SOCS-box protein) E3 ubiquitin-protein ligase complex which mediates the ubiquitination and subsequent proteasomal degradation of target proteins. Plays a role in spindle dynamics and genome integrity by targeting the mitotic progression protein PSRC1 for proteasomal degradation in a cell cycle-dependent manner. Also participates in meiosis by mediating the proper attachment between kinetochores and microtubules. This chain is Ankyrin repeat and SOCS box protein 7 (ASB7), found in Macaca fascicularis (Crab-eating macaque).